Here is a 231-residue protein sequence, read N- to C-terminus: MATVSDLALLLVAGLVAISLHMQEAGAVKFELKNQCEYTVWAAGLPGGGQQLDQGQTWPVEVPAGTKGARFWGRTGCSFDASGRGTCKTGDCNSQLSCQVSGGVPTTLAEYTLNGDGNKDFYDVSLVDGFNVPLSINPTNSQCFAPACKADVNAACPAQLKVDGGCNSACTVFQTDEYCCRGTHVDNCSPSSYSMIFKNQCPQAYSYAKDDSSSTFTCPSGTTDYSIVFCP.

An N-terminal signal peptide occupies residues 1 to 27; that stretch reads MATVSDLALLLVAGLVAISLHMQEAGA. 8 cysteine pairs are disulfide-bonded: cysteine 36/cysteine 230, cysteine 77/cysteine 87, cysteine 92/cysteine 98, cysteine 143/cysteine 218, cysteine 148/cysteine 201, cysteine 156/cysteine 166, cysteine 170/cysteine 179, and cysteine 180/cysteine 188.

Belongs to the thaumatin family.

In terms of biological role, may be involved in disease resistance. This Cryptomeria japonica (Japanese cedar) protein is Pathogenesis-related thaumatin-like protein 3.7.